Here is a 633-residue protein sequence, read N- to C-terminus: Threonine--tRNA ligase (633 aa).

One can recognise a TGS domain in the interval 1 to 61 (MINIHFSNNL…IENCTFEVIT (61 aa)). The interval 242 to 533 (DHRKIGRELE…LIEHHSGKFP (292 aa)) is catalytic. 3 residues coordinate Zn(2+): cysteine 333, histidine 384, and histidine 510.

It belongs to the class-II aminoacyl-tRNA synthetase family. In terms of assembly, homodimer. Zn(2+) is required as a cofactor.

It localises to the cytoplasm. It catalyses the reaction tRNA(Thr) + L-threonine + ATP = L-threonyl-tRNA(Thr) + AMP + diphosphate + H(+). Catalyzes the attachment of threonine to tRNA(Thr) in a two-step reaction: L-threonine is first activated by ATP to form Thr-AMP and then transferred to the acceptor end of tRNA(Thr). Also edits incorrectly charged L-seryl-tRNA(Thr). This Ehrlichia chaffeensis (strain ATCC CRL-10679 / Arkansas) protein is Threonine--tRNA ligase.